We begin with the raw amino-acid sequence, 352 residues long: Histidine biosynthesis bifunctional protein HisB (352 aa).

The interval 1 to 164 is histidinol-phosphatase; it reads MSQKILFIDR…EIENEILSSF (164 aa). Asp9 (nucleophile) is an active-site residue. 2 residues coordinate Mg(2+): Asp9 and Asp11. Residue Asp11 is the Proton donor of the active site. The Zn(2+) site is built by Cys93, His95, Cys101, and Cys103. Asp130 contacts Mg(2+). The segment at 165 to 352 is imidazoleglycerol-phosphate dehydratase; sequence RSASYQRTTK…ENLASSKGVI (188 aa).

In the N-terminal section; belongs to the histidinol-phosphatase family. The protein in the C-terminal section; belongs to the imidazoleglycerol-phosphate dehydratase family. It depends on Mg(2+) as a cofactor. The cofactor is Zn(2+).

Its subcellular location is the cytoplasm. It carries out the reaction D-erythro-1-(imidazol-4-yl)glycerol 3-phosphate = 3-(imidazol-4-yl)-2-oxopropyl phosphate + H2O. It catalyses the reaction L-histidinol phosphate + H2O = L-histidinol + phosphate. It functions in the pathway amino-acid biosynthesis; L-histidine biosynthesis; L-histidine from 5-phospho-alpha-D-ribose 1-diphosphate: step 6/9. The protein operates within amino-acid biosynthesis; L-histidine biosynthesis; L-histidine from 5-phospho-alpha-D-ribose 1-diphosphate: step 8/9. In Campylobacter jejuni subsp. doylei (strain ATCC BAA-1458 / RM4099 / 269.97), this protein is Histidine biosynthesis bifunctional protein HisB.